Consider the following 316-residue polypeptide: L-lactate dehydrogenase (316 aa).

NAD(+) is bound by residues valine 15, aspartate 37, lysine 42, tyrosine 68, and 82–83 (GL). Substrate is bound by residues glutamine 85, arginine 91, and 123-126 (NPVD). Residues 121–123 (ASN) and threonine 146 contribute to the NAD(+) site. Residue 151–154 (DTSR) participates in substrate binding. Residues arginine 156 and histidine 171 each contribute to the beta-D-fructose 1,6-bisphosphate site. Residue histidine 178 is the Proton acceptor of the active site. Tyrosine 222 carries the phosphotyrosine modification. Threonine 231 contributes to the substrate binding site.

This sequence belongs to the LDH/MDH superfamily. LDH family. As to quaternary structure, homotetramer.

The protein localises to the cytoplasm. It carries out the reaction (S)-lactate + NAD(+) = pyruvate + NADH + H(+). The protein operates within fermentation; pyruvate fermentation to lactate; (S)-lactate from pyruvate: step 1/1. Allosterically activated by fructose 1,6-bisphosphate (FBP). In terms of biological role, catalyzes the conversion of lactate to pyruvate. The chain is L-lactate dehydrogenase from Borreliella burgdorferi (strain ATCC 35210 / DSM 4680 / CIP 102532 / B31) (Borrelia burgdorferi).